The primary structure comprises 873 residues: MTLSRSSADDSTNNANRSYSAVAGTDNKRKRDEDSSDYVGVAESLEMLKKQEIDADHMAASAQQTLISWRSGENSRSLSSSGECSSSNRPESTRLQIFVRMMSGGKTIVIHAEKYDTVEKLHQRIEWKTKIPALEQRVIYKGKQLQRENSLTYYSIEQDASLQLVARMQSTEHPVAWQTIDDIMYTISRMYKGENLQSNINEKIVTFFAMIPVESDESIAKYLNIFSNSSVPAALVMLYASSLERNKSCAKSSVKLFLSNCVALPKNQKNYCLPIVLEFCKLLRKVCPDQKLYVTCRNTLGSMLETFDNPHGVYNDQYETFGVEIFPFFTELTGLLLNELAQNSGPSFCDFQKVSSFWQQLRKVIELKVAFPIPIVLPMQSTALEAEIRHLHRLFGSLLTTMDLCMCRVESSLADKEVGNSETMSSSWSQYLSILKIINSMSNIYQGAKGQLAVMLNKNKVSFSALVVKFAKRGDDHQWIFEYKEATNFEARRHLAMLLFPDVKEDFEEMHEMLIDRSNLLSESFEYIVGASPEALHGGLFMEFKNEEATGPGVLREWFYLVCQEIFNPKNTLFLRSADDFRRFSPNPASKVDPLHPDFFEFTGRVIALALMHKVQVGVLFDRVFFLQLAGLKISLEDIKDTDRIMYNSCKQILEMDPEFFDSNAGLGLTFVLETEELGKRDTIELCPDGKLKAVNSKNRKQYVDLLIERRFATPILEQVKQFSRGFTDMLSHSVPPRSFFKRLYLEDLDGMLRGGENPISIDDWKAHTEYNGFKETDRQIDWFWKILKKMTEEEQRSILFFWTSNKFVPVEGFRGLSSKLYIYRLYEANDRLPLSHTCFYRLCIPRYPTITLMEQRLRLIAQDHVSSSFGKW.

A compositionally biased stretch (polar residues) spans 1–19; the sequence is MTLSRSSADDSTNNANRSY. Disordered regions lie at residues 1 to 37 and 70 to 90; these read MTLSRSSADDSTNNANRSYSAVAGTDNKRKRDEDSSD and RSGENSRSLSSSGECSSSNRP. Positions 95–171 constitute a Ubiquitin-like domain; it reads LQIFVRMMSG…LQLVARMQST (77 aa). The C-type lectin domain maps to 272–296; it reads CLPIVLEFCKLLRKVCPDQKLYVTC. Residues 532–873 enclose the HECT domain; sequence SPEALHGGLF…DHVSSSFGKW (342 aa). C839 (glycyl thioester intermediate) is an active-site residue.

It belongs to the UPL family. As to quaternary structure, interacts with WRKY53.

The protein resides in the cytoplasm. It catalyses the reaction S-ubiquitinyl-[E2 ubiquitin-conjugating enzyme]-L-cysteine + [acceptor protein]-L-lysine = [E2 ubiquitin-conjugating enzyme]-L-cysteine + N(6)-ubiquitinyl-[acceptor protein]-L-lysine.. The protein operates within protein modification; protein ubiquitination. Functionally, E3 ubiquitin protein ligase that regulates leaf senescence through ubiquitination and subsequent degradation of WRKY53. This chain is E3 ubiquitin-protein ligase UPL5 (UPL5), found in Arabidopsis thaliana (Mouse-ear cress).